Here is a 197-residue protein sequence, read N- to C-terminus: Imidazoleglycerol-phosphate dehydratase (197 aa).

Belongs to the imidazoleglycerol-phosphate dehydratase family.

Its subcellular location is the cytoplasm. The enzyme catalyses D-erythro-1-(imidazol-4-yl)glycerol 3-phosphate = 3-(imidazol-4-yl)-2-oxopropyl phosphate + H2O. The protein operates within amino-acid biosynthesis; L-histidine biosynthesis; L-histidine from 5-phospho-alpha-D-ribose 1-diphosphate: step 6/9. This is Imidazoleglycerol-phosphate dehydratase from Pseudomonas fluorescens (strain ATCC BAA-477 / NRRL B-23932 / Pf-5).